The chain runs to 265 residues: S-adenosylmethionine decarboxylase proenzyme (265 aa).

Ser-114 (schiff-base intermediate with substrate; via pyruvic acid) is an active-site residue. Ser-114 is subject to Pyruvic acid (Ser); by autocatalysis. Catalysis depends on His-119, which acts as the Proton acceptor; for processing activity. Cys-142 functions as the Proton donor; for catalytic activity in the catalytic mechanism.

This sequence belongs to the prokaryotic AdoMetDC family. Type 2 subfamily. Heterooctamer of four alpha and four beta chains arranged as a tetramer of alpha/beta heterodimers. Requires pyruvate as cofactor. Is synthesized initially as an inactive proenzyme. Formation of the active enzyme involves a self-maturation process in which the active site pyruvoyl group is generated from an internal serine residue via an autocatalytic post-translational modification. Two non-identical subunits are generated from the proenzyme in this reaction, and the pyruvate is formed at the N-terminus of the alpha chain, which is derived from the carboxyl end of the proenzyme. The post-translation cleavage follows an unusual pathway, termed non-hydrolytic serinolysis, in which the side chain hydroxyl group of the serine supplies its oxygen atom to form the C-terminus of the beta chain, while the remainder of the serine residue undergoes an oxidative deamination to produce ammonia and the pyruvoyl group blocking the N-terminus of the alpha chain.

The catalysed reaction is S-adenosyl-L-methionine + H(+) = S-adenosyl 3-(methylsulfanyl)propylamine + CO2. Its pathway is amine and polyamine biosynthesis; S-adenosylmethioninamine biosynthesis; S-adenosylmethioninamine from S-adenosyl-L-methionine: step 1/1. Functionally, catalyzes the decarboxylation of S-adenosylmethionine to S-adenosylmethioninamine (dcAdoMet), the propylamine donor required for the synthesis of the polyamines spermine and spermidine from the diamine putrescine. This is S-adenosylmethionine decarboxylase proenzyme from Buchnera aphidicola subsp. Acyrthosiphon pisum (strain 5A).